Consider the following 333-residue polypeptide: Lipoyl synthase (333 aa).

[4Fe-4S] cluster-binding residues include C56, C61, C67, C82, C86, C89, and S293. One can recognise a Radical SAM core domain in the interval W68–S282. Residues Q301 to W333 are disordered. Positions M314–S325 are enriched in low complexity.

It belongs to the radical SAM superfamily. Lipoyl synthase family. The cofactor is [4Fe-4S] cluster.

The protein localises to the cytoplasm. It carries out the reaction [[Fe-S] cluster scaffold protein carrying a second [4Fe-4S](2+) cluster] + N(6)-octanoyl-L-lysyl-[protein] + 2 oxidized [2Fe-2S]-[ferredoxin] + 2 S-adenosyl-L-methionine + 4 H(+) = [[Fe-S] cluster scaffold protein] + N(6)-[(R)-dihydrolipoyl]-L-lysyl-[protein] + 4 Fe(3+) + 2 hydrogen sulfide + 2 5'-deoxyadenosine + 2 L-methionine + 2 reduced [2Fe-2S]-[ferredoxin]. Its pathway is protein modification; protein lipoylation via endogenous pathway; protein N(6)-(lipoyl)lysine from octanoyl-[acyl-carrier-protein]: step 2/2. Catalyzes the radical-mediated insertion of two sulfur atoms into the C-6 and C-8 positions of the octanoyl moiety bound to the lipoyl domains of lipoate-dependent enzymes, thereby converting the octanoylated domains into lipoylated derivatives. The chain is Lipoyl synthase from Frankia casuarinae (strain DSM 45818 / CECT 9043 / HFP020203 / CcI3).